The sequence spans 237 residues: Ribonuclease PH (237 aa).

Residues Arg86 and 124–126 (GTR) contribute to the phosphate site.

This sequence belongs to the RNase PH family. As to quaternary structure, homohexameric ring arranged as a trimer of dimers.

The enzyme catalyses tRNA(n+1) + phosphate = tRNA(n) + a ribonucleoside 5'-diphosphate. Phosphorolytic 3'-5' exoribonuclease that plays an important role in tRNA 3'-end maturation. Removes nucleotide residues following the 3'-CCA terminus of tRNAs; can also add nucleotides to the ends of RNA molecules by using nucleoside diphosphates as substrates, but this may not be physiologically important. Probably plays a role in initiation of 16S rRNA degradation (leading to ribosome degradation) during starvation. The sequence is that of Ribonuclease PH from Methylorubrum extorquens (strain CM4 / NCIMB 13688) (Methylobacterium extorquens).